The chain runs to 300 residues: Protoheme IX farnesyltransferase (300 aa).

The next 9 helical transmembrane spans lie at 26–46, 54–74, 102–122, 123–143, 150–170, 177–197, 224–244, 246–266, and 279–299; these read VVQLIVFCALIGMVLAVPGLP, IAWACAGVWLVAGAAAAFNCI, LLFSALLCVAGSALLYFLVNP, LTMWLTFATFVGYAVIYTLIL, NIVIGGASGAMPPVLGWAAMT, ALILFLIIFLWTPPHFWALAL, VLLYTLILFAACLMPFIYGMS, WPYLAAAVLLGAGFCGYGFAL, and FRFSLIHLSALFAALLLDHYL.

This sequence belongs to the UbiA prenyltransferase family. Protoheme IX farnesyltransferase subfamily.

It localises to the cell inner membrane. The enzyme catalyses heme b + (2E,6E)-farnesyl diphosphate + H2O = Fe(II)-heme o + diphosphate. The protein operates within porphyrin-containing compound metabolism; heme O biosynthesis; heme O from protoheme: step 1/1. Its function is as follows. Converts heme B (protoheme IX) to heme O by substitution of the vinyl group on carbon 2 of heme B porphyrin ring with a hydroxyethyl farnesyl side group. The polypeptide is Protoheme IX farnesyltransferase (Verminephrobacter eiseniae (strain EF01-2)).